The primary structure comprises 367 residues: Trans-enoyl reductase opdC (367 aa).

NADP(+)-binding positions include 47-50, 199-202, Y217, 264-265, and 353-354; these read YDAK, SPHN, LD, and IT.

The protein belongs to the zinc-containing alcohol dehydrogenase family. In terms of assembly, monomer.

It participates in secondary metabolite biosynthesis. Functionally, trans-enoyl reductase; part of the gene cluster that mediates the biosynthesis of oxopyrrolidines, polyketide-amino acid hybrid compounds with feature structures of tetramic acid. The polyketide chain is first assembled by the highly reducing PKS module of opdA using acetyl-CoA as the starter unit and five malonyl-CoA as the extender units. OpdC acts as a trans-acting enoyl reductase and reduces the terminal alkenyl to alkane. The 17R in oxopyrrolidine A and 15R, 17S in oxopyrrolidine B are generated by non-stereospecific catalysis of the ketoreductase (KR) domain and enoyl reductases. Then the polyketides with specific configurations are transferred to the NRPS module of opdA and linked to L-tyrosine to form an amide bond. Finally, the oxopyrrolidines are offloaded through a Dieckmann cyclization catalyzed by the terminal D domain to give a tetramic acid moiety. In Penicillium oxalicum (strain 114-2 / CGMCC 5302) (Penicillium decumbens), this protein is Trans-enoyl reductase opdC.